Consider the following 105-residue polypeptide: Heat shock protein HspQ (105 aa).

The interval 76–105 (EMRDEHPEQPSMDELARTIRKQLQAPRLRN) is disordered.

The protein belongs to the HspQ family.

The protein localises to the cytoplasm. Functionally, involved in the degradation of certain denaturated proteins, including DnaA, during heat shock stress. This Salmonella agona (strain SL483) protein is Heat shock protein HspQ.